The sequence spans 255 residues: tRNA pseudouridine synthase A (255 aa).

Asp-53 acts as the Nucleophile in catalysis. Position 113 (Tyr-113) interacts with substrate.

It belongs to the tRNA pseudouridine synthase TruA family. Homodimer.

The enzyme catalyses uridine(38/39/40) in tRNA = pseudouridine(38/39/40) in tRNA. Its function is as follows. Formation of pseudouridine at positions 38, 39 and 40 in the anticodon stem and loop of transfer RNAs. The chain is tRNA pseudouridine synthase A from Acidiphilium cryptum (strain JF-5).